Reading from the N-terminus, the 185-residue chain is Ribosome-recycling factor (185 aa).

The protein belongs to the RRF family.

The protein resides in the cytoplasm. Responsible for the release of ribosomes from messenger RNA at the termination of protein biosynthesis. May increase the efficiency of translation by recycling ribosomes from one round of translation to another. This chain is Ribosome-recycling factor, found in Serratia proteamaculans (strain 568).